The primary structure comprises 257 residues: 2,3,4,5-tetrahydropyridine-2,6-dicarboxylate N-acetyltransferase (257 aa).

Belongs to the transferase hexapeptide repeat family. DapH subfamily.

The enzyme catalyses (S)-2,3,4,5-tetrahydrodipicolinate + acetyl-CoA + H2O = L-2-acetamido-6-oxoheptanedioate + CoA. It functions in the pathway amino-acid biosynthesis; L-lysine biosynthesis via DAP pathway; LL-2,6-diaminopimelate from (S)-tetrahydrodipicolinate (acetylase route): step 1/3. In terms of biological role, catalyzes the transfer of an acetyl group from acetyl-CoA to tetrahydrodipicolinate. The protein is 2,3,4,5-tetrahydropyridine-2,6-dicarboxylate N-acetyltransferase of Lactococcus lactis subsp. cremoris (strain SK11).